The following is a 501-amino-acid chain: Solute carrier family 2, facilitated glucose transporter member 5 (501 aa).

Met-1 carries the post-translational modification N-acetylmethionine. Over 1-18 (MEQQDQSMKEGRLTLVLA) the chain is Cytoplasmic. Residues 19–39 (LATLIAAFGSSFQYGYNVAAV) traverse the membrane as a helical segment. Position 32 (Tyr-32) interacts with D-fructose. Topologically, residues 40-68 (NSPALLMQQFYNETYYGRTGEFMEDFPLT) are extracellular. N-linked (GlcNAc...) asparagine glycosylation occurs at Asn-51. Residues 69–91 (LLWSVTVSMFPFGGFIGSLLVGP) form a helical membrane-spanning segment. The Cytoplasmic segment spans residues 92–98 (LVNKFGR). Residues 99–119 (KGALLFNNIFSIVPAILMGCS) form a helical membrane-spanning segment. Topologically, residues 120 to 126 (RVAKSFE) are extracellular. A helical membrane pass occupies residues 127–149 (LIIISRLLVGICAGVSSNVVPMY). The Cytoplasmic segment spans residues 150–161 (LGELAPKNLRGA). The helical transmembrane segment at 162–182 (LGVVPQLFITVGILVAQIFGL) threads the bilayer. Gln-167 serves as a coordination point for D-fructose. Over 183 to 192 (RNLLANVDGW) the chain is Extracellular. Residues 193 to 213 (PILLGLTGVPAALQLVLLPFF) form a helical membrane-spanning segment. Topologically, residues 214–277 (PESPRYLLIQ…LFRMRSLRWQ (64 aa)) are cytoplasmic. A helical membrane pass occupies residues 278–298 (LLSIIVLMGGQQLSGVNAIYY). Residues Gln-288 and 296-298 (IYY) contribute to the D-fructose site. At 299-313 (YADQIYLSAGVPKEH) the chain is on the extracellular side. A helical membrane pass occupies residues 314–334 (VQFVTAGTGAVNVVMTFCAVF). The Cytoplasmic portion of the chain corresponds to 335 to 342 (VVELLGRR). Residues 343-363 (LLLLLGFSICLVACCVLTAAL) form a helical membrane-spanning segment. Residues 364 to 371 (ALQDTVSW) are Extracellular-facing. A helical transmembrane segment spans residues 372 to 394 (MPYISIVCVISYVIGHALGPSPI). A D-fructose-binding site is contributed by His-387. Residues 395-412 (PALLITEIFLQSSRPSAF) lie on the Cytoplasmic side of the membrane. Residues 413–433 (MVGGSVHWLSNFTVGLIFPFI) form a helical membrane-spanning segment. 419–420 (HW) is a binding site for D-fructose. Over 434 to 439 (QEGLGP) the chain is Extracellular. A helical membrane pass occupies residues 440–460 (YSFIVFAVICLLTTIYIFLIV). Residues 461–501 (PETKAKTFIEINQIFTKMNKVSEVYPEKEELKELPPVTLEQ) are Cytoplasmic-facing.

It belongs to the major facilitator superfamily. Sugar transporter (TC 2.A.1.1) family. Glucose transporter subfamily.

It localises to the apical cell membrane. The protein resides in the cell membrane. The protein localises to the sarcolemma. The catalysed reaction is D-fructose(out) = D-fructose(in). Functionally, functions as a fructose transporter that has only low activity with other monosaccharides. Can mediate the uptake of deoxyglucose, but with low efficiency. Essential for fructose uptake in the small intestine. Plays a role in the regulation of salt uptake and blood pressure in response to dietary fructose. Required for the development of high blood pressure in response to high dietary fructose intake. This is Solute carrier family 2, facilitated glucose transporter member 5 from Pongo abelii (Sumatran orangutan).